Consider the following 496-residue polypeptide: L-arabinose isomerase (496 aa).

The Mn(2+) site is built by glutamate 305, glutamate 330, histidine 347, and histidine 446.

It belongs to the arabinose isomerase family. The cofactor is Mn(2+).

The catalysed reaction is beta-L-arabinopyranose = L-ribulose. The protein operates within carbohydrate degradation; L-arabinose degradation via L-ribulose; D-xylulose 5-phosphate from L-arabinose (bacterial route): step 1/3. Its function is as follows. Catalyzes the conversion of L-arabinose to L-ribulose. In Bacillus subtilis (strain 168), this protein is L-arabinose isomerase.